A 314-amino-acid polypeptide reads, in one-letter code: ADP-L-glycero-D-manno-heptose-6-epimerase (314 aa).

NADP(+) contacts are provided by residues methionine 10–isoleucine 11, aspartate 31–histidine 32, lysine 38, arginine 53, glutamate 75–serine 79, and asparagine 92. The active-site Proton acceptor is tyrosine 139. Position 143 (lysine 143) interacts with NADP(+). Asparagine 174 provides a ligand contact to substrate. Valine 175 and lysine 183 together coordinate NADP(+). Lysine 183 serves as the catalytic Proton acceptor. Substrate is bound by residues serine 185, histidine 192, phenylalanine 206–serine 209, arginine 214, and tyrosine 277.

This sequence belongs to the NAD(P)-dependent epimerase/dehydratase family. HldD subfamily. In terms of assembly, homopentamer. The cofactor is NADP(+).

It catalyses the reaction ADP-D-glycero-beta-D-manno-heptose = ADP-L-glycero-beta-D-manno-heptose. The protein operates within nucleotide-sugar biosynthesis; ADP-L-glycero-beta-D-manno-heptose biosynthesis; ADP-L-glycero-beta-D-manno-heptose from D-glycero-beta-D-manno-heptose 7-phosphate: step 4/4. Functionally, catalyzes the interconversion between ADP-D-glycero-beta-D-manno-heptose and ADP-L-glycero-beta-D-manno-heptose via an epimerization at carbon 6 of the heptose. The sequence is that of ADP-L-glycero-D-manno-heptose-6-epimerase from Vibrio cholerae serotype O1 (strain ATCC 39541 / Classical Ogawa 395 / O395).